The sequence spans 232 residues: uncharacterized protein (232 aa).

The 232-residue stretch at 1–232 (MIIKKSGGRW…LYTMGVSARF (232 aa)) folds into the Autotransporter domain.

This is an uncharacterized protein from Escherichia coli (strain K12).